The following is a 249-amino-acid chain: Type III pantothenate kinase (249 aa).

6–13 (DCGNSFIK) is a binding site for ATP. Substrate-binding positions include Y93 and 100-103 (GLDR). The active-site Proton acceptor is the D102. Residue D122 coordinates K(+). Residue T125 coordinates ATP. T181 is a binding site for substrate.

The protein belongs to the type III pantothenate kinase family. In terms of assembly, homodimer. NH4(+) serves as cofactor. The cofactor is K(+).

The protein resides in the cytoplasm. It carries out the reaction (R)-pantothenate + ATP = (R)-4'-phosphopantothenate + ADP + H(+). It participates in cofactor biosynthesis; coenzyme A biosynthesis; CoA from (R)-pantothenate: step 1/5. Functionally, catalyzes the phosphorylation of pantothenate (Pan), the first step in CoA biosynthesis. The chain is Type III pantothenate kinase from Pseudomonas syringae pv. syringae (strain B728a).